We begin with the raw amino-acid sequence, 721 residues long: Leucine-rich repeat flightless-interacting protein 2 (721 aa).

The DVL3-binding stretch occupies residues 1-370 (MGTPASGRKR…YMQGLKELKE (370 aa)). Position 18 is a phosphoserine (Ser-18). Residues 22–49 (EALSNIAREAEARLAAKRAARAEARDIR) adopt a coiled-coil conformation. 6 positions are modified to phosphoserine: Gly-96, Leu-101, Tyr-168, Ser-173, Ser-190, and Ser-202. Disordered regions lie at residues 232-262 (SARS…ESVV) and 295-338 (KSDK…IDPD). Polar residues-rich tracts occupy residues 237-251 (PGFT…VSSD) and 305-338 (TRPS…IDPD). Ser-309, Ser-312, Ser-320, Ser-324, and Ser-328 each carry phosphoserine. Thr-331 carries the phosphothreonine modification. A phosphoserine mark is found at Ser-332 and Ser-333. Coiled-coil stretches lie at residues 349-524 (DLKD…GEKH) and 566-714 (LDVR…KANR).

This sequence belongs to the LRRFIP family. As to quaternary structure, interacts (via N-terminus) with DVL3. Interacts with FLII. Weakly interacts with MYD88 in resting cells. Following LPS-stimulation, the interaction with MYD88 is rapidly enhanced; the complex gradually dissociates to basal levels after 6 hours of stimulation. Interaction with MYD88 is regulated by LPS-induced phosphorylation at Ser-202. In the presence of LPS, competes with FLII for MYD88-binding. In terms of processing, ser-190 and Ser-202 are phosphorylated in response to LPS stimulation. Ser-202 phosphorylation regulates the LPS-induced interaction with MYD88. Widely expressed, with highest levels in heart and skeletal muscle.

In terms of biological role, may function as activator of the canonical Wnt signaling pathway, in association with DVL3, upstream of CTNNB1/beta-catenin. Positively regulates Toll-like receptor (TLR) signaling in response to agonist probably by competing with the negative FLII regulator for MYD88-binding. In Homo sapiens (Human), this protein is Leucine-rich repeat flightless-interacting protein 2 (LRRFIP2).